A 1219-amino-acid chain; its full sequence is Polyamine-transporting ATPase 13A3 (1219 aa).

The Cytoplasmic segment spans residues 1 to 28 (MDKEERKTINKGQEDEMEIHGYNLCRWK). An intramembrane segment occupies 29–49 (LAMVFVGVICTGGFLLLLLYW). Residues 50 to 201 (LPEWRVKATC…IAVKVPSVFK (152 aa)) are Cytoplasmic-facing. Residues 202–222 (LLIKEVLNPFYIFQLFSVILW) traverse the membrane as a helical segment. Residues 223–228 (SVDEYY) are Lumenal-facing. The helical transmembrane segment at 229 to 249 (YYALAIVIMSVVSIISSLYSI) threads the bilayer. Residues 250–405 (RKQYVMLHDM…KPTDFKLYRD (156 aa)) are Cytoplasmic-facing. A helical membrane pass occupies residues 406-426 (AYLFLLCLVVVAGIGFIYTII). The Lumenal segment spans residues 427–444 (NSILNEKEVQEIIIKSLD). A helical membrane pass occupies residues 445–465 (IITITVPPALPAAMTAGIVYA). The Cytoplasmic portion of the chain corresponds to 466–936 (QRRLKKVGIF…ALMTSFCVFK (471 aa)). Asp-494 acts as the 4-aspartylphosphate intermediate in catalysis. 2 residues coordinate Mg(2+): Asp-494 and Thr-496. Residues 494–496 (DKT), Phe-624, Arg-680, and Asp-746 each bind ATP. A Phosphoserine modification is found at Ser-813. Mg(2+) is bound by residues Asp-879 and Asp-883. An ATP-binding site is contributed by 879 to 883 (DGAND). A helical membrane pass occupies residues 937–957 (FMALYSIIQYFSVTLLYSILS). Residue Asn-958 is a topological domain, lumenal. A helical transmembrane segment spans residues 959 to 979 (LGDFQFLFIDLAIILVVVFTM). Residues 980–995 (SLNPAWKELVAQRPPS) are Cytoplasmic-facing. A helical transmembrane segment spans residues 996–1016 (GLISGALLFSVLSQIVISVGF). Over 1017–1066 (QSLGFFWVKQYKVCDPNSDVCNTTRSACWNSSHLYNGTELDSCKIQNYEN) the chain is Lumenal. Residues 1067 to 1087 (TTVFFISSFQYLTVAVAFSKG) form a helical membrane-spanning segment. Topologically, residues 1088 to 1098 (KPFRQPCYKNY) are cytoplasmic. Residues 1099 to 1119 (FFVISVIILYVFILFIMLHPV) traverse the membrane as a helical segment. At 1120–1136 (ASVDQVLEIMCVPYQWR) the chain is on the lumenal side. A helical membrane pass occupies residues 1137–1157 (IYMLIIVLINAFVSITVEESV). Residues 1158–1219 (DRWGKCCLSW…NGSCQIITIA (62 aa)) lie on the Cytoplasmic side of the membrane.

It belongs to the cation transport ATPase (P-type) (TC 3.A.3) family. Type V subfamily. In terms of tissue distribution, expression is greatest in liver, followed by kidney, colon, stomach, brain and small intestine. Isoform 1 is highly expressed in the kidney while isoform 2 is highly expressed in the brain.

Its subcellular location is the recycling endosome membrane. It localises to the early endosome membrane. The protein resides in the late endosome membrane. The catalysed reaction is putrescine(out) + ATP + H2O = putrescine(in) + ADP + phosphate + H(+). ATP-driven pump involved in endocytosis-dependent polyamine transport. Uses ATP as an energy source to transfer polyamine precursor putrescine from the endosomal compartment to the cytosol. This chain is Polyamine-transporting ATPase 13A3, found in Mus musculus (Mouse).